A 268-amino-acid chain; its full sequence is Ribosomal RNA small subunit methyltransferase A (268 aa).

S-adenosyl-L-methionine contacts are provided by N21, L23, G48, E69, D94, and N115.

This sequence belongs to the class I-like SAM-binding methyltransferase superfamily. rRNA adenine N(6)-methyltransferase family. RsmA subfamily.

It is found in the cytoplasm. It catalyses the reaction adenosine(1518)/adenosine(1519) in 16S rRNA + 4 S-adenosyl-L-methionine = N(6)-dimethyladenosine(1518)/N(6)-dimethyladenosine(1519) in 16S rRNA + 4 S-adenosyl-L-homocysteine + 4 H(+). In terms of biological role, specifically dimethylates two adjacent adenosines (A1518 and A1519) in the loop of a conserved hairpin near the 3'-end of 16S rRNA in the 30S particle. May play a critical role in biogenesis of 30S subunits. This Saccharophagus degradans (strain 2-40 / ATCC 43961 / DSM 17024) protein is Ribosomal RNA small subunit methyltransferase A.